Reading from the N-terminus, the 367-residue chain is Probable butyrate kinase (367 aa).

Belongs to the acetokinase family.

It is found in the cytoplasm. The enzyme catalyses butanoate + ATP = butanoyl phosphate + ADP. The sequence is that of Probable butyrate kinase from Bacillus cereus (strain B4264).